The following is a 511-amino-acid chain: Protoheme IX farnesyltransferase, mitochondrial (511 aa).

Residues 1 to 23 (MSSSTESLPGTLRRTLTTSRAPA) constitute a mitochondrion transit peptide. Disordered regions lie at residues 1 to 27 (MSSSTESLPGTLRRTLTTSRAPAATSS) and 50 to 136 (HDSA…LAPD). 3 stretches are compositionally biased toward low complexity: residues 52–79 (SASSQRSTTVASTTSTTADAADGSSSTT), 104–115 (RKAAAAAAAAAA), and 126–136 (PDAPTADLAPD). A run of 8 helical transmembrane segments spans residues 168–188 (LTVLVVLSAMVPYALYPVPSF), 197–217 (SLAPSLSPLTLLFLTTGTTLC), 253–273 (AAVLFAVGCGLAGTLALYFGV), 275–295 (PTVSFLGAANIALYAGAYTPL), 303–323 (TWVGAIVGGIPPLMGWAAAAG), 344–364 (LGGWLFAGLLFAWQFPHFMPL), 398–418 (AFIPLCVGLSATGVTEWSFAV), and 444–464 (ARGLFWASVWHLPVIMVLALA).

Belongs to the UbiA prenyltransferase family.

It localises to the mitochondrion membrane. Functionally, converts protoheme IX and farnesyl diphosphate to heme O. The polypeptide is Protoheme IX farnesyltransferase, mitochondrial (pft-1) (Neurospora crassa (strain ATCC 24698 / 74-OR23-1A / CBS 708.71 / DSM 1257 / FGSC 987)).